Consider the following 338-residue polypeptide: Transcription factor MYB76 (338 aa).

2 HTH myb-type domains span residues 9-65 (GEGL…KPDI) and 66-116 (KRGE…KKRL). 2 DNA-binding regions (H-T-H motif) span residues 37–61 (WRDIPEKAGLKRCGKSCRLRWTNYL) and 89–112 (WSVIARHLPKRTDNEVKNYWNTHL). Disordered stretches follow at residues 123–171 (PVTH…SSNL) and 176–195 (SKISSGETQIESGHVSCKKR). Over residues 140-154 (MKFDFQKKSNQDEHS) the composition is skewed to basic and acidic residues. Over residues 155-171 (SQSSSTTPASLPLSSNL) the composition is skewed to low complexity.

In terms of assembly, can form complexes with MYC2, MYC3 or MYC4. In terms of tissue distribution, expressed in both vegetative and generative organs. Mostly present in inflorescences, flowers and seedlings, in the transition zone between roots and the foliar part, and stems, and, to a lower extent, in leaves (in midvein and trichomes).

The protein localises to the nucleus. In terms of biological role, plays a role in determining the spatial distribution of aliphatic glucosinolates (AGLSs) within the leaf, mostly short chained. Together with MYB28/HAG1 and MYB29/HAG3, promotes aliphatic glucosinolate biosynthesis and represses indolic glucosinolate biosynthesis, but could not activate AGSL biosynthesis on its own. This chain is Transcription factor MYB76 (MYB76), found in Arabidopsis thaliana (Mouse-ear cress).